We begin with the raw amino-acid sequence, 117 residues long: MKSKRGFTLLEVLVALAIFATAAISVIRSVSQHINTVNYLEEKMFAAMVVDNQMAQVMLNPQSLAAREGSEQMAGRTWYWKLSPVKTADNLLKAFDVSVATEKGATPVVTVRSYVAN.

A propeptide spans 1-6 (leader sequence); the sequence is MKSKRG. F7 bears the N-methylphenylalanine mark. The chain crosses the membrane as a helical span at residues 7–27; that stretch reads FTLLEVLVALAIFATAAISVI.

The protein belongs to the GSP I family. As to quaternary structure, type II secretion is composed of four main components: the outer membrane complex, the inner membrane complex, the cytoplasmic secretion ATPase and the periplasm-spanning pseudopilus. Interacts with core component EpsG. In terms of processing, cleaved by prepilin peptidase. Methylated by prepilin peptidase at the amino group of the N-terminal phenylalanine once the leader sequence is cleaved by prepilin peptidase.

Its subcellular location is the cell inner membrane. Functionally, component of the type II secretion system required for the energy-dependent secretion of extracellular factors such as proteases and toxins from the periplasm. Part of the pseudopilus tip complex that is critical for the recognition and binding of secretion substrates. This Vibrio cholerae serotype O1 (strain ATCC 39315 / El Tor Inaba N16961) protein is Type II secretion system protein I (epsI).